Reading from the N-terminus, the 230-residue chain is uncharacterized protein (230 aa).

To E.coli HemX N-terminal region.

This is an uncharacterized protein from Haemophilus influenzae (strain ATCC 51907 / DSM 11121 / KW20 / Rd).